Here is a 259-residue protein sequence, read N- to C-terminus: Phosphatidylglycerol--prolipoprotein diacylglyceryl transferase (259 aa).

4 helical membrane-spanning segments follow: residues 10-30, 50-70, 86-106, and 112-132; these read IGLL…LFAY, IISW…ILFY, WKGG…MYIF, and IKFL…IFLG. Position 133 (Arg133) interacts with a 1,2-diacyl-sn-glycero-3-phospho-(1'-sn-glycerol). 3 helical membrane-spanning segments follow: residues 169–189, 197–217, and 227–247; these read LYEA…LFFF, GMLF…IEFV, and ILFN…ILGI.

The protein belongs to the Lgt family.

It localises to the cell inner membrane. The catalysed reaction is L-cysteinyl-[prolipoprotein] + a 1,2-diacyl-sn-glycero-3-phospho-(1'-sn-glycerol) = an S-1,2-diacyl-sn-glyceryl-L-cysteinyl-[prolipoprotein] + sn-glycerol 1-phosphate + H(+). It participates in protein modification; lipoprotein biosynthesis (diacylglyceryl transfer). Its function is as follows. Catalyzes the transfer of the diacylglyceryl group from phosphatidylglycerol to the sulfhydryl group of the N-terminal cysteine of a prolipoprotein, the first step in the formation of mature lipoproteins. This is Phosphatidylglycerol--prolipoprotein diacylglyceryl transferase from Ehrlichia ruminantium (strain Welgevonden).